The following is a 194-amino-acid chain: uncharacterized protein (194 aa).

The region spanning 20 to 185 is the Exonuclease domain; it reads RIFIDTETTG…ADCRMTLGII (166 aa).

This is an uncharacterized protein from Escherichia coli (Bacteriophage 186).